Reading from the N-terminus, the 263-residue chain is Endonuclease 8 (263 aa).

The Schiff-base intermediate with DNA role is filled by proline 2. Residue glutamate 3 is the Proton donor of the active site. Lysine 53 (proton donor; for beta-elimination activity) is an active-site residue. Residues glutamine 70, arginine 125, and asparagine 169 each coordinate DNA. The FPG-type zinc-finger motif lies at 229–263; the sequence is KVFHRDGELCERCGGIIEKTTLSSRPFYWCPGCQH. Arginine 253 acts as the Proton donor; for delta-elimination activity in catalysis.

It belongs to the FPG family. It depends on Zn(2+) as a cofactor.

It carries out the reaction 2'-deoxyribonucleotide-(2'-deoxyribose 5'-phosphate)-2'-deoxyribonucleotide-DNA = a 3'-end 2'-deoxyribonucleotide-(2,3-dehydro-2,3-deoxyribose 5'-phosphate)-DNA + a 5'-end 5'-phospho-2'-deoxyribonucleoside-DNA + H(+). Its function is as follows. Involved in base excision repair of DNA damaged by oxidation or by mutagenic agents. Acts as a DNA glycosylase that recognizes and removes damaged bases. Has a preference for oxidized pyrimidines, such as thymine glycol, 5,6-dihydrouracil and 5,6-dihydrothymine. Has AP (apurinic/apyrimidinic) lyase activity and introduces nicks in the DNA strand. Cleaves the DNA backbone by beta-delta elimination to generate a single-strand break at the site of the removed base with both 3'- and 5'-phosphates. The sequence is that of Endonuclease 8 from Shigella flexneri serotype 5b (strain 8401).